We begin with the raw amino-acid sequence, 534 residues long: Glucans biosynthesis protein D (534 aa).

The tat-type signal signal peptide spans 1–30 (MRMQRRHLLKNAAAALAALGLPALPQWALA).

It belongs to the OpgD/OpgG family. Post-translationally, predicted to be exported by the Tat system. The position of the signal peptide cleavage has not been experimentally proven.

It is found in the periplasm. The protein operates within glycan metabolism; osmoregulated periplasmic glucan (OPG) biosynthesis. Probably involved in the control of the structural glucose backbone of osmoregulated periplasmic glucans (OPGs). The sequence is that of Glucans biosynthesis protein D from Xanthomonas oryzae pv. oryzae (strain PXO99A).